The following is a 173-amino-acid chain: Regulator of ribonuclease activity A (173 aa).

The protein belongs to the RraA family. Homotrimer. Binds to both RNA-binding sites in the C-terminal region of Rne and to RhlB.

It localises to the cytoplasm. Globally modulates RNA abundance by binding to RNase E (Rne) and regulating its endonucleolytic activity. Can modulate Rne action in a substrate-dependent manner by altering the composition of the degradosome. Modulates RNA-binding and helicase activities of the degradosome. This Vibrio vulnificus (strain YJ016) protein is Regulator of ribonuclease activity A.